Reading from the N-terminus, the 513-residue chain is MRKIEFFDTSLRDGEQTPGVSFSISEKVTIAKQLEKWRISVIEAGFSAASPDSFEAVKQIADSLNDTAVTALARCVISDIDKAVEAVKGAKYPQIHVFIATSPIHMKYKLKISPEEVLKNIDKCVRYARERVEVVEFSPEDATRTELNFLLEAVQTAVDAGATYINIPDTVGYTTPEEYGKIFKFLIDNTKSDREIIFSPHCHDDLGMAVANSLAAIKAGAGRVEGTVNGIGERAGNAALEEIAVALHIRKDFYQAQSPLKLSETAATAELISQFSGIAIPKNKAIVGANAFAHESGIHQDGVLKNAETYEIITPELVGIKHNSLPLGKLSGRHAFSEKLTELNIAYDDESLAILFEKFKKLADKKKEITDADIHALFTGETVKNLAGFILDNVQIDGHKALVQLKNQEEEIYVSQGEGSGSVDAIFKAIDKVFNHQLKLISYSVDAVTDGIDAQATTLVSVENLSTGTIFNAKGVDYDVLKGSAIAYMNANVLVQKENLQGKVEQISAHDGI.

One can recognise a Pyruvate carboxyltransferase domain in the interval 4–266; it reads IEFFDTSLRD…QSPLKLSETA (263 aa). The Mn(2+) site is built by Asp-13, His-201, His-203, and Asn-237. Positions 390-513 are regulatory domain; the sequence is ILDNVQIDGH…VEQISAHDGI (124 aa).

It belongs to the alpha-IPM synthase/homocitrate synthase family. LeuA type 1 subfamily. In terms of assembly, homodimer. The cofactor is Mn(2+).

It localises to the cytoplasm. The enzyme catalyses 3-methyl-2-oxobutanoate + acetyl-CoA + H2O = (2S)-2-isopropylmalate + CoA + H(+). It participates in amino-acid biosynthesis; L-leucine biosynthesis; L-leucine from 3-methyl-2-oxobutanoate: step 1/4. Its function is as follows. Catalyzes the condensation of the acetyl group of acetyl-CoA with 3-methyl-2-oxobutanoate (2-ketoisovalerate) to form 3-carboxy-3-hydroxy-4-methylpentanoate (2-isopropylmalate). In Lactococcus lactis subsp. lactis (strain IL1403) (Streptococcus lactis), this protein is 2-isopropylmalate synthase.